Consider the following 207-residue polypeptide: Large ribosomal subunit protein bL9 (207 aa).

Basic and acidic residues predominate over residues 162–176 (QKKEEKAKDEVSATE). The disordered stretch occupies residues 162 to 207 (QKKEEKAKDEVSATEKDEELMLSSVTNDNDGDGAKEIVVEGTEESQ).

Belongs to the bacterial ribosomal protein bL9 family.

Functionally, binds to the 23S rRNA. In Ehrlichia ruminantium (strain Gardel), this protein is Large ribosomal subunit protein bL9.